A 323-amino-acid polypeptide reads, in one-letter code: HPr kinase/phosphorylase (323 aa).

Active-site residues include H146 and K167. Position 161–168 (G161–S168) interacts with ATP. S168 is a Mg(2+) binding site. The active-site Proton acceptor; for phosphorylation activity. Proton donor; for dephosphorylation activity is D185. The segment at L209 to D218 is important for the catalytic mechanism of both phosphorylation and dephosphorylation. E210 is a binding site for Mg(2+). Residue R250 is part of the active site. Positions Q271–R276 are important for the catalytic mechanism of dephosphorylation.

This sequence belongs to the HPrK/P family. As to quaternary structure, homohexamer. Mg(2+) is required as a cofactor.

The enzyme catalyses [HPr protein]-L-serine + ATP = [HPr protein]-O-phospho-L-serine + ADP + H(+). It carries out the reaction [HPr protein]-O-phospho-L-serine + phosphate + H(+) = [HPr protein]-L-serine + diphosphate. Catalyzes the ATP- as well as the pyrophosphate-dependent phosphorylation of a specific serine residue in HPr, a phosphocarrier protein of the phosphoenolpyruvate-dependent sugar phosphotransferase system (PTS). HprK/P also catalyzes the pyrophosphate-producing, inorganic phosphate-dependent dephosphorylation (phosphorolysis) of seryl-phosphorylated HPr (P-Ser-HPr). The chain is HPr kinase/phosphorylase from Cupriavidus necator (strain ATCC 17699 / DSM 428 / KCTC 22496 / NCIMB 10442 / H16 / Stanier 337) (Ralstonia eutropha).